The sequence spans 483 residues: Altronate oxidoreductase (483 aa).

18 to 29 (IIQFGEGNFLRA) lines the NAD(+) pocket.

This sequence belongs to the mannitol dehydrogenase family. UxaB subfamily.

It carries out the reaction D-altronate + NAD(+) = keto-D-tagaturonate + NADH + H(+). The protein operates within carbohydrate metabolism; pentose and glucuronate interconversion. The polypeptide is Altronate oxidoreductase (Yersinia enterocolitica serotype O:8 / biotype 1B (strain NCTC 13174 / 8081)).